The following is a 940-amino-acid chain: Mating-type protein A-alpha Z4 (940 aa).

Positions 110 to 182 form a DNA-binding region, homeobox; TALE-type; it reads GAELSATPLP…AARARMGWGD (73 aa). Disordered stretches follow at residues 333–618, 633–762, 832–863, and 877–912; these read KQRQ…TGDP, PRDL…GLRP, GQKA…SSLV, and EAPK…DTVR. A compositionally biased stretch (basic and acidic residues) spans 337 to 360; that stretch reads ARREQRRAQKDRMDAQRRAEDRKC. Acidic residues-rich tracts occupy residues 376 to 400 and 427 to 469; these read ESDE…DGED and ATED…EEEE. 3 stretches are compositionally biased toward low complexity: residues 516 to 531, 582 to 611, and 657 to 693; these read PSSR…SPSP, VRSR…PSGG, and SRSL…SDAT. Over residues 694–703 the composition is skewed to acidic residues; the sequence is DITEPDEATT. Low complexity predominate over residues 704–724; sequence ADETTTQSTSASSSRDTTSQQ. A compositionally biased stretch (basic and acidic residues) spans 877–896; it reads EAPKPAKAPKNDRRYLERRE.

Belongs to the TALE/M-ATYP homeobox family.

The protein localises to the nucleus. Functionally, specifies A-alpha-4 mating-type. May regulate the expression of genes specific to the homokaryotic cell type. The chain is Mating-type protein A-alpha Z4 from Schizophyllum commune (Split gill fungus).